A 435-amino-acid polypeptide reads, in one-letter code: Evolutionarily conserved signaling intermediate in Toll pathway, mitochondrial (435 aa).

The N-terminal 48 residues, 1–48, are a transit peptide targeting the mitochondrion; it reads MSWVQVNLLVRSLSRGWGGLCRPALSGTPFAQVSLQALRGLHCSAATH. Lysine 372 participates in a covalent cross-link: Glycyl lysine isopeptide (Lys-Gly) (interchain with G-Cter in ubiquitin). Residues 401 to 435 are disordered; that stretch reads LTTSRLEGQSPPHSPPKGPEEDDETIQAEQQQGQS.

Belongs to the ECSIT family. In terms of assembly, interacts with MAP3K1, SMAD4 and TRAF6. Interacts with SMAD1 only after BMP4-treatment. Part of the mitochondrial complex I assembly/MCIA complex that comprises at least the core subunits TMEM126B, NDUFAF1, ECSIT and ACAD9 and complement subunits such as COA1 and TMEM186. Interacts with NDUFAF1. Interacts with ACAD9. Interacts with TRIM59. Interacts with TMEM70 and TMEM242. Interacts (when ubiquitinated) with NF-kappa-B subunits RELA and NFKB1. Interacts with RIGI, IFIT1 and MAVS; these interactions promote RLR-mediated type I IFN induction. Interacts with SQSTM1; this interaction inhibits TLR4 signaling via functional regulation of the TRAF6-ECSIT complex. Interacts with cereblon/CRBN; this interaction inhibits the ubiquitination of ECSIT. In terms of processing, ubiquitinated on Lys-372; leading to translocation in the nucleus together with RELA and NFKB1 and expression of NF-kappa-B-dependent genes. In terms of tissue distribution, detected in heart, brain, lung, liver, skeletal muscle, kidney and testis. Detected in embryonic mesoderm and epiblast, and in extraembryonic ectoderm.

It localises to the cytoplasm. The protein localises to the nucleus. Its subcellular location is the mitochondrion. Adapter protein that plays a role in different signaling pathways including TLRs and IL-1 pathways or innate antiviral induction signaling. Plays a role in the activation of NF-kappa-B by forming a signal complex with TRAF6 and TAK1/MAP3K7 to activate TAK1/MAP3K7 leading to activation of IKKs. Once ubiquitinated, interacts with the dissociated RELA and NFKB1 proteins and translocates to the nucleus where it induces NF-kappa-B-dependent gene expression. Plays a role in innate antiviral immune response by bridging the pattern recognition receptors RIGI and MDA5/IFIT1 to the MAVS complex at the mitochondrion. Promotes proteolytic activation of MAP3K1. Involved in the BMP signaling pathway. Required for normal embryonic development. Its function is as follows. As part of the MCIA complex, involved in the assembly of the mitochondrial complex I. The chain is Evolutionarily conserved signaling intermediate in Toll pathway, mitochondrial from Mus musculus (Mouse).